Here is a 570-residue protein sequence, read N- to C-terminus: Proline--tRNA ligase (570 aa).

It belongs to the class-II aminoacyl-tRNA synthetase family. ProS type 1 subfamily. In terms of assembly, homodimer.

It localises to the cytoplasm. The catalysed reaction is tRNA(Pro) + L-proline + ATP = L-prolyl-tRNA(Pro) + AMP + diphosphate. Its function is as follows. Catalyzes the attachment of proline to tRNA(Pro) in a two-step reaction: proline is first activated by ATP to form Pro-AMP and then transferred to the acceptor end of tRNA(Pro). As ProRS can inadvertently accommodate and process non-cognate amino acids such as alanine and cysteine, to avoid such errors it has two additional distinct editing activities against alanine. One activity is designated as 'pretransfer' editing and involves the tRNA(Pro)-independent hydrolysis of activated Ala-AMP. The other activity is designated 'posttransfer' editing and involves deacylation of mischarged Ala-tRNA(Pro). The misacylated Cys-tRNA(Pro) is not edited by ProRS. In Shewanella pealeana (strain ATCC 700345 / ANG-SQ1), this protein is Proline--tRNA ligase.